A 576-amino-acid polypeptide reads, in one-letter code: MELNAGGVIAYISSSSSASSPASCHSEGSENSFQSSSSSVPSSPNSSNCDANGNPKNADISSIDGVLKSDRTDCPVKTGKTSAPGMTKSHSGMTKFSGMVLLCKVCGDVASGFHYGVHACEGCKGFFRRSIQQNIQYKKCLKNENCSIMRMNRNRCQQCRFKKCLSVGMSRDAVRFGRIPKREKQRMLIEMQSAMKTMMNTQFSGHLQNDTLAEQHDQSALPAQEQLRPKSQLEQENIKNTPSDFAKEEVIGMVTRAHKDTFLYNQEHRENSSESMPPQRGERIPRNMEQYNLNQDHRGSGIHNHFPCSERQQHLSGQYKGRNIMHYPNGHAVCIANGHCMNFSSAYTQRVCDRIPVGGCSQTENRNSYLCNTGGRMHLVCPMSKSPYVDPQKSGHEIWEEFSMSFTPAVKEVVEFAKRIPGFRDLSQHDQVNLLKAGTFEVLMVRFASLFDAKERTVTFLSGKKYSVDDLHSMGAGDLLSSMFEFSEKLNALQLSDEEMSLFTAVVLVSADRSGIENVNSVEALQETLIRALRTLIMKNHPNEASIFTKLLLKLPDLRSLNNMHSEELLAFKVHP.

The tract at residues 1–60 (MELNAGGVIAYISSSSSASSPASCHSEGSENSFQSSSSSVPSSPNSSNCDANGNPKNADI) is required for phosphorylation by CSNK1E and cytoplasmic localization. The segment at 1–99 (MELNAGGVIA…HSGMTKFSGM (99 aa)) is modulating. Low complexity predominate over residues 13 to 47 (SSSSSASSPASCHSEGSENSFQSSSSSVPSSPNSS). Residues 13 to 90 (SSSSSASSPA…TSAPGMTKSH (78 aa)) are disordered. Ser-46 bears the Phosphoserine; by GSK3-beta mark. A DNA-binding region (nuclear receptor) is located at residues 100 to 176 (VLLCKVCGDV…VGMSRDAVRF (77 aa)). NR C4-type zinc fingers lie at residues 103-123 (CKVCGDVASGFHYGVHACEGC) and 140-164 (CLKNENCSIMRMNRNRCQQCRFKKC). An N6-acetyllysine; by KAT5 mark is found at Lys-162 and Lys-163. 2 disordered regions span residues 215-246 (QHDQSALPAQEQLRPKSQLEQENIKNTPSDFA) and 263-282 (LYNQEHRENSSESMPPQRGE). Composition is skewed to basic and acidic residues over residues 227–237 (LRPKSQLEQEN) and 263–272 (LYNQEHRENS). Cystine bridges form between Cys-334–Cys-340 and Cys-371–Cys-381. One can recognise an NR LBD domain in the interval 366 to 576 (RNSYLCNTGG…EELLAFKVHP (211 aa)). Heme-binding residues include Cys-381 and His-565. Residues 394 to 576 (SGHEIWEEFS…EELLAFKVHP (183 aa)) form an interaction with ZNHIT1 region.

The protein belongs to the nuclear hormone receptor family. NR1 subfamily. In terms of assembly, binds DNA as a monomer or a homodimer. Interacts with NCOA5 coactivator, leading to a strong increase of transcription of target genes. Interacts (via N-terminus) with KAT5. Interacts (via C-terminus) with HDAC1. Interacts with ZNHIT1. Interacts with SIAH2. In terms of processing, deacetylated by HDAC1. Acetylation and deacetylation regulate its transcriptional regulatory activity. Under more reducing intracellular redox conditions, Cys-381 is in its heme-bound state, which is optimal for recruitment of the NCOR1/HDAC3 corepressor complex and repression of target genes. When subjected to oxidative stress conditions, Cys-381 undergoes oxidation to form a disulfide bridge with Cys-371, also triggering a ligand switch that results in release of bound heme and derepression of target genes. Post-translationally, ubiquitinated by SIAH2; leading to its proteasomal degradation. In terms of processing, phosphorylated by CSNK1E; phosphorylation enhances its cytoplasmic localization. In terms of tissue distribution, ubiquitous. Expressed abundantly in skeletal muscle and brown adipose tissue. Expressed during skeletal muscle myogenesis.

The protein resides in the nucleus. Its subcellular location is the cytoplasm. Its activity is regulated as follows. The heme-bound form can bind gaseous signaling molecules such as CO and nitric oxide (NO) and NO can reverse its transcriptional repressor activity. Functionally, transcriptional repressor which coordinates circadian rhythm and metabolic pathways in a heme-dependent manner. Integral component of the complex transcription machinery that governs circadian rhythmicity and forms a critical negative limb of the circadian clock by directly repressing the expression of core clock components BMAL1 and CLOCK. Also regulates genes involved in metabolic functions, including lipid metabolism and the inflammatory response. Acts as a receptor for heme which stimulates its interaction with the NCOR1/HDAC3 corepressor complex, enhancing transcriptional repression. Recognizes two classes of DNA response elements within the promoter of its target genes and can bind to DNA as either monomers or homodimers, depending on the nature of the response element. Binds as a monomer to a response element composed of the consensus half-site motif 5'-[A/G]GGTCA-3' preceded by an A/T-rich 5' sequence (RevRE), or as a homodimer to a direct repeat of the core motif spaced by two nuclegotides (RevDR-2). Acts as a potent competitive repressor of ROR alpha (RORA) function and also negatively regulates the expression of NR1D1. Regulates lipid and energy homeostasis in the skeletal muscle via repression of genes involved in lipid metabolism and myogenesis including: CD36, FABP3, FABP4, UCP3, SCD1 and MSTN. Regulates hepatic lipid metabolism via the repression of APOC3. Represses gene expression at a distance in macrophages by inhibiting the transcription of enhancer-derived RNAs (eRNAs). In addition to its activity as a repressor, can also act as a transcriptional activator. Acts as a transcriptional activator of the sterol regulatory element-binding protein 1 (SREBF1) and the inflammatory mediator interleukin-6 (IL6) in the skeletal muscle. Plays a role in the regulation of circadian sleep/wake cycle; essential for maintaining wakefulness during the dark phase or active period. Key regulator of skeletal muscle mitochondrial function; negatively regulates the skeletal muscle expression of core clock genes and genes involved in mitochondrial biogenesis, fatty acid beta-oxidation and lipid metabolism. May play a role in the circadian control of neutrophilic inflammation in the lung. The protein is Nuclear receptor subfamily 1 group D member 2 of Mus musculus (Mouse).